The following is a 572-amino-acid chain: uncharacterized protein (572 aa).

Positions 543 to 572 (AYKKSSNTNSTTNSMNPRRSTVSSEDWVLN) are disordered. The segment covering 547-563 (SSNTNSTTNSMNPRRST) has biased composition (low complexity).

This is an uncharacterized protein from Acanthamoeba polyphaga (Amoeba).